Reading from the N-terminus, the 150-residue chain is Small ribosomal subunit protein uS15 (150 aa).

A disordered region spans residues 1 to 22 (MNKRREKGQSHSTRPPHPQPPQ).

The protein belongs to the universal ribosomal protein uS15 family. Part of the 30S ribosomal subunit.

In Aeropyrum pernix (strain ATCC 700893 / DSM 11879 / JCM 9820 / NBRC 100138 / K1), this protein is Small ribosomal subunit protein uS15.